Consider the following 386-residue polypeptide: Innexin unc-9 (386 aa).

4 helical membrane passes run 33 to 53 (TAII…GFPI), 103 to 123 (QWVP…TIVW), 197 to 217 (FLYI…IFLL), and 282 to 302 (IFLF…CSLF).

This sequence belongs to the pannexin family. Heterooligomer of unc-7 and unc-9. Interacts with F-actin. In terms of tissue distribution, expressed in PLM neurons (at protein level). Expressed in the nerve ring.

The protein localises to the cell membrane. It localises to the cell junction. The protein resides in the gap junction. In terms of biological role, structural component of gap junctions. Plays a role in maintaining gap junction activity to promote locomotion. This Caenorhabditis elegans protein is Innexin unc-9.